The following is a 300-amino-acid chain: Bidirectional sugar transporter SWEET12 (300 aa).

Topologically, residues 1–4 are extracellular; it reads MVQA. Residues 5 to 25 form a helical membrane-spanning segment; it reads LVFAVGIVGNILSFLVILAPV. Residues 8-92 form the MtN3/slv 1 domain; it reads AVGIVGNILS…TVYLLYAPRQ (85 aa). Over 26 to 38 the chain is Cytoplasmic; the sequence is PTFYRVYKKKSTE. The helical transmembrane segment at 39 to 61 threads the bilayer; sequence SFQSVPYAVALLSAMLWLYYALL. Residues 62 to 67 lie on the Extracellular side of the membrane; sequence TSDLLL. A helical transmembrane segment spans residues 68-88; that stretch reads LSINSIGCLVESLYLTVYLLY. Over 89-99 the chain is Cytoplasmic; it reads APRQAMAFTLK. Residues 100-120 traverse the membrane as a helical segment; it reads LVCAMNLALFAAVVAALQLLV. At 121-128 the chain is on the extracellular side; that stretch reads KATDRRVT. The helical transmembrane segment at 129 to 149 threads the bilayer; it reads LAGGIGASFALAVFVAPLTII. One can recognise a MtN3/slv 2 domain in the interval 131 to 213; it reads GGIGASFALA…VLYVVYKNPK (83 aa). The Cytoplasmic portion of the chain corresponds to 150–162; that stretch reads RQVIRTKSVEFMP. Residues 163–183 traverse the membrane as a helical segment; the sequence is FWLSFFLTLSAVVWFFYGLLM. At 184–185 the chain is on the extracellular side; it reads KD. A helical membrane pass occupies residues 186–206; it reads FFVATPNVLGLLFGLAQMVLY. Topologically, residues 207–300 are cytoplasmic; that stretch reads VVYKNPKKNS…PPALPAVEVA (94 aa). The interval 256 to 300 is disordered; that stretch reads ADLEAAAPATPQRPADDDAIDHRSVVVDIPPPPQPPPALPAVEVA. A compositionally biased stretch (basic and acidic residues) spans 269 to 280; sequence PADDDAIDHRSV. Residues 284–294 show a composition bias toward pro residues; sequence IPPPPQPPPAL.

It belongs to the SWEET sugar transporter family. As to quaternary structure, forms homooligomers and/or heterooligomers.

The protein localises to the cell membrane. Functionally, mediates both low-affinity uptake and efflux of sugar across the plasma membrane. Confers blight susceptibility. Confers TAL effector-mediated susceptibility to Xanthomonas oryzae pv. oryzae. This chain is Bidirectional sugar transporter SWEET12 (SWEET12), found in Oryza sativa subsp. japonica (Rice).